The following is a 320-amino-acid chain: Dual oxidase maturation factor 2 (320 aa).

The Extracellular portion of the chain corresponds to 1–21 (MTLWNGVLPFYPQPRHAAGFS). The helical transmembrane segment at 22–42 (VPLLIVILVFLALAASFLLIL) threads the bilayer. Residues 43-56 (PGIRGHSRWFWLVR) lie on the Cytoplasmic side of the membrane. Residues 57 to 77 (VLLSLFIGAEIVAVHFSAEWF) traverse the membrane as a helical segment. At 78–183 (VGTVNTNTSY…HLAGHYASAT (106 aa)) the chain is on the extracellular side. N-linked (GlcNAc...) asparagine glycans are attached at residues N84, N109, and N121. A helical membrane pass occupies residues 184 to 204 (LWVAFCFWLLSNVLLSTPAPL). The Cytoplasmic portion of the chain corresponds to 205 to 206 (YG). The chain crosses the membrane as a helical span at residues 207–227 (GLALLTTGAFALFGVFALASI). At 228–247 (SSVPLCPLRLGSSALTTQYG) the chain is on the extracellular side. A helical transmembrane segment spans residues 248–268 (AAFWVTLATGVLCLFLGGAVV). Over 269-320 (SLQYVRPSALRTLLDQSAKDCSQERGGSPLILGDPLHKQAALPDLKCITTNL) the chain is Cytoplasmic.

Belongs to the DUOXA family. In terms of assembly, heterodimer with DUXA2; disulfide-linked. Interacts with CSNK1G2. Post-translationally, N-glycosylated. Specifically expressed in thyroid. Also detected in salivary glands.

The protein localises to the endoplasmic reticulum membrane. In terms of biological role, required for the maturation and the transport from the endoplasmic reticulum to the plasma membrane of functional DUOX2. May play a role in thyroid hormone synthesis. This chain is Dual oxidase maturation factor 2 (DUOXA2), found in Homo sapiens (Human).